The chain runs to 322 residues: uncharacterized protein (322 aa).

The signal sequence occupies residues 1–32 (MRDGIGKRAASALFLCGVLVMLAVSSAIVSSA).

This is an uncharacterized protein from Bacillus subtilis (strain 168).